The sequence spans 480 residues: Flap endonuclease 1 (480 aa).

The segment at 1–106 (MGIKGLTKFI…SELEKRGEKR (106 aa)) is N-domain. D34 serves as a coordination point for Mg(2+). The DNA site is built by R47 and R72. D88, E160, E162, D181, and D183 together coordinate Mg(2+). The tract at residues 124 to 266 (EIKKQSGRTV…KTAYNLIKEY (143 aa)) is I-domain. E160 is a binding site for DNA. The DNA site is built by G244 and D246. A Mg(2+)-binding site is contributed by D246. Residues 349–357 (TQRRLDTFF) are interaction with PCNA. The disordered stretch occupies residues 379–461 (TKGKGKKREI…NIKNENVKED (83 aa)). Residues 404–428 (NVKDEKKNNEKVDELKNKSDENLVK) show a composition bias toward basic and acidic residues. The segment covering 429 to 438 (DEEDDQDDYD) has biased composition (acidic residues).

The protein belongs to the XPG/RAD2 endonuclease family. FEN1 subfamily. As to quaternary structure, interacts with PCNA. Three molecules of FEN1 bind to one PCNA trimer with each molecule binding to one PCNA monomer. PCNA stimulates the nuclease activity without altering cleavage specificity. It depends on Mg(2+) as a cofactor. In terms of processing, phosphorylated. Phosphorylation upon DNA damage induces relocalization to the nuclear plasma.

The protein localises to the nucleus. It is found in the nucleolus. The protein resides in the nucleoplasm. It localises to the mitochondrion. Inhibited by monovalent metal ions. Functionally, structure-specific nuclease with 5'-flap endonuclease and 5'-3' exonuclease activities involved in DNA replication and repair. During DNA replication, cleaves the 5'-overhanging flap structure that is generated by displacement synthesis when DNA polymerase encounters the 5'-end of a downstream Okazaki fragment. It enters the flap from the 5'-end and then tracks to cleave the flap base, leaving a nick for ligation. Also involved in the long patch base excision repair (LP-BER) pathway, by cleaving within the apurinic/apyrimidinic (AP) site-terminated flap. Acts as a genome stabilization factor that prevents flaps from equilibrating into structures that lead to duplications and deletions. Also possesses 5'-3' exonuclease activity on nicked or gapped double-stranded DNA, and exhibits RNase H activity. Also involved in replication and repair of rDNA and in repairing mitochondrial DNA. This Plasmodium yoelii yoelii protein is Flap endonuclease 1.